The chain runs to 158 residues: SsrA-binding protein (158 aa).

This sequence belongs to the SmpB family.

The protein resides in the cytoplasm. Functionally, required for rescue of stalled ribosomes mediated by trans-translation. Binds to transfer-messenger RNA (tmRNA), required for stable association of tmRNA with ribosomes. tmRNA and SmpB together mimic tRNA shape, replacing the anticodon stem-loop with SmpB. tmRNA is encoded by the ssrA gene; the 2 termini fold to resemble tRNA(Ala) and it encodes a 'tag peptide', a short internal open reading frame. During trans-translation Ala-aminoacylated tmRNA acts like a tRNA, entering the A-site of stalled ribosomes, displacing the stalled mRNA. The ribosome then switches to translate the ORF on the tmRNA; the nascent peptide is terminated with the 'tag peptide' encoded by the tmRNA and targeted for degradation. The ribosome is freed to recommence translation, which seems to be the essential function of trans-translation. In Caldanaerobacter subterraneus subsp. tengcongensis (strain DSM 15242 / JCM 11007 / NBRC 100824 / MB4) (Thermoanaerobacter tengcongensis), this protein is SsrA-binding protein.